Consider the following 178-residue polypeptide: Large ribosomal subunit protein uL6 (178 aa).

The protein belongs to the universal ribosomal protein uL6 family. As to quaternary structure, part of the 50S ribosomal subunit.

Functionally, this protein binds to the 23S rRNA, and is important in its secondary structure. It is located near the subunit interface in the base of the L7/L12 stalk, and near the tRNA binding site of the peptidyltransferase center. This chain is Large ribosomal subunit protein uL6, found in Francisella tularensis subsp. tularensis (strain WY96-3418).